The following is a 66-amino-acid chain: Large ribosomal subunit protein bL33c (66 aa).

This sequence belongs to the bacterial ribosomal protein bL33 family.

It localises to the plastid. It is found in the chloroplast. The chain is Large ribosomal subunit protein bL33c from Nicotiana sylvestris (Wood tobacco).